A 47-amino-acid chain; its full sequence is Sperm protamine P1 (47 aa).

The protein belongs to the protamine P1 family. As to expression, testis.

It localises to the nucleus. The protein resides in the chromosome. Its function is as follows. Protamines substitute for histones in the chromatin of sperm during the haploid phase of spermatogenesis. They compact sperm DNA into a highly condensed, stable and inactive complex. This Galeopterus variegatus (Malayan flying lemur) protein is Sperm protamine P1 (PRM1).